A 128-amino-acid chain; its full sequence is Cytochrome b (128 aa).

A run of 3 helical transmembrane segments spans residues 25-45, 69-90, and 105-125; these read FGSM…FLAI, WIMQ…YIHI, and WLSG…XMCY. Residues H75 and H89 each contribute to the heme b site. Residue H126 coordinates a ubiquinone.

Belongs to the cytochrome b family. The cytochrome bc1 complex contains 3 respiratory subunits (MT-CYB, CYC1 and UQCRFS1), 2 core proteins (UQCRC1 and UQCRC2) and probably 6 low-molecular weight proteins. The cofactor is heme b.

It is found in the mitochondrion inner membrane. Functionally, component of the ubiquinol-cytochrome c reductase complex (complex III or cytochrome b-c1 complex) that is part of the mitochondrial respiratory chain. The b-c1 complex mediates electron transfer from ubiquinol to cytochrome c. Contributes to the generation of a proton gradient across the mitochondrial membrane that is then used for ATP synthesis. The chain is Cytochrome b (MT-CYB) from Crotalus viridis viridis (Prairie rattlesnake).